The sequence spans 574 residues: MRFSSCYIPTLKESPADAEVISHKLLLRAGMVRRLTSGLYIYLPLGLRVINKIARTVREEMEKAGFRELLMPMVQPGDLWKETGRWEHYGKELLRFKDRNEREYCLGPTHEEVITDLVRGEVRSYRQLPVRLYQVQTKFRDEIRPRFGLMRGREFMMKDGYSFDATAEGAEESYKIMYDAYMSIFSRLGLRFRAVEADTGSIGGNFSHEFMVLADTGEDTIAFCHDCEYAANVERAEVAWRGSPSTGGCPAMEKIATPGAHSVEELTALLGVPASAIVKTMLFKVDGKTVAVLVRGDREVNDIKLKNLLKAQEVELADAATVQAVTAAPVGFAGPVALDVPVYADAELQGGTDYVVGANAADAHLKHVDLARDAAVTAWADLRAITADDQCPRCGGRMELTRGIEVGHIFMLGLKYSEAMHAVFLDENGKERTMIMGCYGIGVSRVAAAAIEQNHDEHGIVFPPPVAPFECVLLNLDPRSEEVNAKVEEIYALLQGMGIEVLLDDREERPGVKFKDADLLGIPMQLVVGGKGLGRGIVECKDRRTGEKGELSAASLEQDFAAWSEKVRQGWASR.

It belongs to the class-II aminoacyl-tRNA synthetase family. ProS type 1 subfamily. As to quaternary structure, homodimer.

The protein resides in the cytoplasm. The enzyme catalyses tRNA(Pro) + L-proline + ATP = L-prolyl-tRNA(Pro) + AMP + diphosphate. Its function is as follows. Catalyzes the attachment of proline to tRNA(Pro) in a two-step reaction: proline is first activated by ATP to form Pro-AMP and then transferred to the acceptor end of tRNA(Pro). As ProRS can inadvertently accommodate and process non-cognate amino acids such as alanine and cysteine, to avoid such errors it has two additional distinct editing activities against alanine. One activity is designated as 'pretransfer' editing and involves the tRNA(Pro)-independent hydrolysis of activated Ala-AMP. The other activity is designated 'posttransfer' editing and involves deacylation of mischarged Ala-tRNA(Pro). The misacylated Cys-tRNA(Pro) is not edited by ProRS. The protein is Proline--tRNA ligase of Desulfovibrio desulfuricans (strain ATCC 27774 / DSM 6949 / MB).